Here is a 369-residue protein sequence, read N- to C-terminus: N-succinyl-L-Arg/Lys racemase (369 aa).

Substrate contacts are provided by residues Tyr-26, Asp-51, 161–163 (KMK), and 191–193 (DVN). 3 residues coordinate Mg(2+): Asp-191, Glu-218, and Asp-243. Residues Lys-267, 295-296 (SM), and 320-322 (ELT) contribute to the substrate site.

It belongs to the mandelate racemase/muconate lactonizing enzyme family. Mg(2+) is required as a cofactor.

In terms of biological role, catalyzes efficient racemization of N-succinyl-L-Arg and N-succinyl-L-Lys, suggesting that these are physiological substrates of this enzyme. Has low activity with L-Asp-L-Lys, and even lower activity with L-Leu-L-Arg, L-Leu-L-Lys, N-succinyl-L-His and N-succinyl-L-Met (in vitro). The polypeptide is N-succinyl-L-Arg/Lys racemase (Bacillus cereus (strain ATCC 14579 / DSM 31 / CCUG 7414 / JCM 2152 / NBRC 15305 / NCIMB 9373 / NCTC 2599 / NRRL B-3711)).